The following is a 216-amino-acid chain: Adenylate kinase (216 aa).

Position 10–15 (10–15 (GAGKGT)) interacts with ATP. Residues 30–59 (STGDIFRANIKEKTPLGIEAKRYIDNGQLV) form an NMP region. Residues Thr31, Arg36, 57–59 (QLV), 85–88 (GFPR), and Gln92 each bind AMP. An LID region spans residues 126–163 (GRRVCTSCGASYHIRFNPPKIEGKCDICDNELIQRKDD). Arg127 is an ATP binding site. Positions 130 and 133 each coordinate Zn(2+). 136-137 (SY) contributes to the ATP binding site. Zn(2+) contacts are provided by Cys150 and Cys153. AMP contacts are provided by Arg160 and Arg171. Glu199 contacts ATP.

This sequence belongs to the adenylate kinase family. As to quaternary structure, monomer.

The protein localises to the cytoplasm. The catalysed reaction is AMP + ATP = 2 ADP. The protein operates within purine metabolism; AMP biosynthesis via salvage pathway; AMP from ADP: step 1/1. Its function is as follows. Catalyzes the reversible transfer of the terminal phosphate group between ATP and AMP. Plays an important role in cellular energy homeostasis and in adenine nucleotide metabolism. The polypeptide is Adenylate kinase (Clostridium botulinum (strain ATCC 19397 / Type A)).